The following is a 260-amino-acid chain: Carbonic anhydrase 3 (260 aa).

A2 is subject to N-acetylalanine. One can recognise an Alpha-carbonic anhydrase domain in the interval 3 to 259 (KEWGYASHNG…INNRVVRASF (257 aa)). S29, S43, S48, S50, and S55 each carry phosphoserine. The segment at 64 to 67 (KTCR) is involved in proton transfer. T73 is modified (phosphothreonine). Zn(2+) is bound by residues H94, H96, and H119. Y127 bears the Phosphotyrosine mark. T129 and T176 each carry phosphothreonine. S-glutathionyl cysteine occurs at positions 182 and 187. Residue 198–199 (TT) coordinates substrate. T216 is subject to Phosphothreonine. At S219 the chain carries Phosphoserine.

The protein belongs to the alpha-carbonic anhydrase family. It depends on Zn(2+) as a cofactor. S-thiolated both by thiol-disulfide exchange with glutathione disulfide and by oxyradical-initiated S-thiolation with reduced glutathione. In terms of processing, S-glutathionylated in hepatocytes under oxidative stress. In terms of tissue distribution, muscle specific.

The protein localises to the cytoplasm. It carries out the reaction hydrogencarbonate + H(+) = CO2 + H2O. With respect to regulation, activated by proton donors such as imidazole and the dipeptide histidylhistidine. Inhibited by coumarins and sulfonamide derivatives such as acetazolamide. Reversible hydration of carbon dioxide. This is Carbonic anhydrase 3 from Homo sapiens (Human).